The chain runs to 440 residues: Doublesex- and mab-3-related transcription factor A2 (440 aa).

Positions Cys59 to Arg106 form a DNA-binding region, DM. Residues Pro167–Met261 form a disordered region. A compositionally biased stretch (basic and acidic residues) spans Asp199–Ser213. A compositionally biased stretch (low complexity) spans Thr229–Gly241. Over residues Pro251–Met261 the composition is skewed to polar residues. The DMA domain maps to Met261–Gln296.

Belongs to the DMRT family. In terms of tissue distribution, restrictively expressed in brain and developing germ cells, especially in spermatogonia, spermatocytes, spermatids, and sperm cells, and in developing oocytes, including early perinucleolus stage oocyte, late yolk vesicle stage oocyte, and oil drop stage oocyte.

The protein resides in the nucleus. May be involved in sexual development. This chain is Doublesex- and mab-3-related transcription factor A2 (dmrta2), found in Danio rerio (Zebrafish).